The following is a 1220-amino-acid chain: DNA-directed RNA polymerase subunit beta' (1220 aa).

Zn(2+) is bound by residues Cys61, Cys63, Cys76, and Cys79. Positions 450, 452, and 454 each coordinate Mg(2+). A disordered region spans residues 1197–1220 (QPESESEEASDIPKLDDVAKTFDN). A compositionally biased stretch (basic and acidic residues) spans 1207–1220 (DIPKLDDVAKTFDN).

Belongs to the RNA polymerase beta' chain family. In terms of assembly, the RNAP catalytic core consists of 2 alpha, 1 beta, 1 beta' and 1 omega subunit. When a sigma factor is associated with the core the holoenzyme is formed, which can initiate transcription. It depends on Mg(2+) as a cofactor. Requires Zn(2+) as cofactor.

The catalysed reaction is RNA(n) + a ribonucleoside 5'-triphosphate = RNA(n+1) + diphosphate. In terms of biological role, DNA-dependent RNA polymerase catalyzes the transcription of DNA into RNA using the four ribonucleoside triphosphates as substrates. The polypeptide is DNA-directed RNA polymerase subunit beta' (Leuconostoc mesenteroides subsp. mesenteroides (strain ATCC 8293 / DSM 20343 / BCRC 11652 / CCM 1803 / JCM 6124 / NCDO 523 / NBRC 100496 / NCIMB 8023 / NCTC 12954 / NRRL B-1118 / 37Y)).